Here is a 147-residue protein sequence, read N- to C-terminus: Nucleoside diphosphate kinase (147 aa).

Residues lysine 9, phenylalanine 57, arginine 85, threonine 91, arginine 102, and asparagine 112 each coordinate ATP. Histidine 115 serves as the catalytic Pros-phosphohistidine intermediate.

The protein belongs to the NDK family. In terms of assembly, homotetramer. Mg(2+) is required as a cofactor.

It is found in the cytoplasm. It catalyses the reaction a 2'-deoxyribonucleoside 5'-diphosphate + ATP = a 2'-deoxyribonucleoside 5'-triphosphate + ADP. The catalysed reaction is a ribonucleoside 5'-diphosphate + ATP = a ribonucleoside 5'-triphosphate + ADP. In terms of biological role, major role in the synthesis of nucleoside triphosphates other than ATP. The ATP gamma phosphate is transferred to the NDP beta phosphate via a ping-pong mechanism, using a phosphorylated active-site intermediate. The sequence is that of Nucleoside diphosphate kinase from Kosmotoga olearia (strain ATCC BAA-1733 / DSM 21960 / TBF 19.5.1).